The sequence spans 545 residues: MLPINNNFSLPQNSFYNTISGTYADYFSAWDKWEKQALPGEERDEAVSRLKECLINNSDELRLDRLNLSSLPDNLPAQITLLNVSYNQLTNLPELPVTLKKLYSASNKLSELPVLPPALESLQVQHNELENLPALPDSLLTMNISYNEIVSLPSLPQALKNLRATRNFLTELPAFSEGNNPVVREYFFDRNQISHIPESILNLRNECSIHISDNPLSSHALPALQRLTSSPDYHGPRIYFSMSDGQQNTLHRPLADAVTAWFPENKQSDVSQIWHAFEHEEHANTFSAFLDRLSDTVSARNTSGFREQVAAWLEKLSASAELRQQSFAVAADATESCEDRVALTWNNLRKTLLVHQASEGLFDNDTGALLSLGREMFRLEILEDIARDKVRTLHFVDEIEVYLAFQTMLAEKLQLSTAVKEMRFYGVSGVTANDLRTAEAMVRSREENEFTDWFSLWGPWHAVLKRTEADRWAQAEEQKYEMLENEYPQRVADRLKASGLSGDADAEREAGAQVMRETEQQIYRQLTDEVLALRLPENGSQLHHS.

Positions 1–242 (MLPINNNFSL…YHGPRIYFSM (242 aa)) are interaction with target proteins. LRR repeat units follow at residues 57 to 77 (NSDE…NLPA), 78 to 99 (QITL…PVTL), 100 to 117 (KKLY…VLPP), 118 to 139 (ALES…PDSL), 140 to 157 (LTMN…SLPQ), 158 to 179 (ALKN…SEGN), 182 to 203 (VVRE…ILNL), and 205 to 228 (NECS…QRLT). The segment at 243–250 (SDGQQNTL) is linker. An E3 ubiquitin-protein ligase catalytic domain region spans residues 251–545 (HRPLADAVTA…PENGSQLHHS (295 aa)). An NEL domain is found at 253–545 (PLADAVTAWF…PENGSQLHHS (293 aa)). Cys337 acts as the Glycyl thioester intermediate in catalysis.

This sequence belongs to the LRR-containing bacterial E3 ligase family. In terms of assembly, also interacts with human and mouse U2AF1 (U2AF35). Post-translationally, autoubiquitinated (in vitro). Ubiquitinated in the presence of host E1 ubiquitin-activating enzyme, E2 ubiquitin-conjugating enzyme and ubiquitin.

It localises to the secreted. Its subcellular location is the host cytoplasm. The protein resides in the host nucleus. It catalyses the reaction S-ubiquitinyl-[E2 ubiquitin-conjugating enzyme]-L-cysteine + [acceptor protein]-L-lysine = [E2 ubiquitin-conjugating enzyme]-L-cysteine + N(6)-ubiquitinyl-[acceptor protein]-L-lysine.. Its pathway is protein modification; protein ubiquitination. With respect to regulation, exists in an autoinhibited state in the absence of substrate protein, due to interactions of the leucine-rich repeats with NEL domain. Is activated upon binding to a substrate protein. Effector E3 ubiquitin ligase that interferes with host's ubiquitination pathway and modulates the acute inflammatory responses, thus facilitating bacterial colonization within the host cell. Interacts with IKBKG (NEMO) and TNIP1 (ABIN-1), a ubiquitin-binding adapter protein, which results in TNIP1-dependent 'Lys-27'-linked polyubiquitination of IKBKG. Consequently, polyubiquitinated IKBKG undergoes proteasome-dependent degradation, which perturbs NF-kappa-B activation during bacterial infection. Mediates polyubiquitination of host U2AF1, leading to its proteasomal degradation. Catalyzes 'Lys-48'-linked polyubiquitination and subsequent degradation of a subset of host guanylate-binding proteins (GBP1, GBP2, GBP4 and GBP6), thereby suppressing host cell defense. In contrast, host GBP3 and GBP7 are not ubiquitinated by IpaH9.8. Uses UBE2D2 (UBCH5B) as an E2 ubiquitin-conjugating enzyme. In Shigella flexneri, this protein is E3 ubiquitin-protein ligase ipaH9.8.